The sequence spans 311 residues: 1,4-dihydroxy-2-naphthoate octaprenyltransferase (311 aa).

The next 9 membrane-spanning stretches (helical) occupy residues leucine 31–valine 51, leucine 53–phenylalanine 73, threonine 104–serine 126, leucine 131–alanine 153, phenylalanine 157–isoleucine 177, isoleucine 182–leucine 202, leucine 220–alanine 240, isoleucine 242–leucine 262, and threonine 290–phenylalanine 310.

This sequence belongs to the MenA family. Type 1 subfamily.

Its subcellular location is the cell membrane. It catalyses the reaction an all-trans-polyprenyl diphosphate + 1,4-dihydroxy-2-naphthoate + H(+) = a 2-demethylmenaquinol + CO2 + diphosphate. It participates in quinol/quinone metabolism; menaquinone biosynthesis; menaquinol from 1,4-dihydroxy-2-naphthoate: step 1/2. In terms of biological role, conversion of 1,4-dihydroxy-2-naphthoate (DHNA) to demethylmenaquinone (DMK). In Bacillus subtilis (strain 168), this protein is 1,4-dihydroxy-2-naphthoate octaprenyltransferase.